The chain runs to 382 residues: uncharacterized protein (382 aa).

12 consecutive transmembrane segments (helical) span residues 14–34 (GLLL…LWLA), 45–65 (VVSS…GYVI), 79–99 (FIFA…SWLA), 102–122 (FVAG…LMCS), 131–151 (LLAA…LLVS), 157–177 (LMSV…PLLF), 204–224 (LGVN…GLMP), 235–255 (ASIG…QWPI), 270–290 (VQVF…AMAP), 291–311 (ALFI…AWAC), 325–345 (ALLL…AMLM), and 348–368 (FSDN…LLML).

This sequence belongs to the major facilitator superfamily. YcaD (TC 2.A.1.26) family.

The protein localises to the cell inner membrane. This is an uncharacterized protein from Escherichia coli O45:K1 (strain S88 / ExPEC).